We begin with the raw amino-acid sequence, 553 residues long: Transcriptional regulator HilA (553 aa).

Positions 11-107 (NKKFVFDDFI…LYGQGYRFNR (97 aa)) form a DNA-binding region, ompR/PhoB-type. Asp62 bears the 4-aspartylphosphate mark. Residues 372-405 (ADIKYYYGWNLFMAGQLEEALQTINECLKLDPTR) form a TPR repeat.

Its function is as follows. The main transcriptional regulator of the Salmonella pathogenicity island 1 (SPI1) gene expression. Activates the expression of invasion genes by a direct action at their promoters and also indirectly by increasing the level of InvF. Also binds upstream of prgH and directly activates the expression of prgHIJK operon. The chain is Transcriptional regulator HilA (hilA) from Salmonella typhimurium (strain LT2 / SGSC1412 / ATCC 700720).